We begin with the raw amino-acid sequence, 763 residues long: Phospholipid phosphatase-related protein type 4 (763 aa).

The tract at residues 33 to 54 (VHTSPGGGRRPGQAAGMSAKER) is disordered. A Phosphoserine modification is found at Ser36. Transmembrane regions (helical) follow at residues 67–87 (LPCF…SLYF), 119–139 (AIPF…TIMV), and 178–198 (FVGV…IIQL). N-linked (GlcNAc...) asparagine glycans are attached at residues Asn214 and Asn219. The helical transmembrane segment at 247–267 (SFPSQHATLAAFAAVYVSMYF) threads the bilayer. Asn268 carries an N-linked (GlcNAc...) asparagine glycan. The next 2 membrane-spanning stretches (helical) occupy residues 276–296 (KLLK…CGLT) and 308–328 (VYCG…YAVG). The residue at position 346 (Ser346) is a Phosphoserine. Asn362 carries an N-linked (GlcNAc...) asparagine glycan. Ser385 carries the phosphoserine modification. N-linked (GlcNAc...) asparagine glycosylation occurs at Asn432. Residue Ser438 is modified to Phosphoserine. Asn455 carries an N-linked (GlcNAc...) asparagine glycan. Residues 458–529 (RKLSLQVIEP…PRVSIQSRPG (72 aa)) are disordered. 2 positions are modified to phosphoserine: Ser461 and Ser472. Residues Asn513, Asn543, and Asn568 are each glycosylated (N-linked (GlcNAc...) asparagine). Phosphoserine is present on Ser606. Over residues 669–694 (DSESCESLKDSFGSGDRKRSNIDSNE) the composition is skewed to basic and acidic residues. Disordered regions lie at residues 669–698 (DSES…HHHH) and 739–763 (ERSN…AYKD). The span at 740-749 (RSNSPENTRN) shows a compositional bias: polar residues.

The protein belongs to the PA-phosphatase related phosphoesterase family. Post-translationally, O-glycosylated. Probably at Ser-346. Expressed by glutamatergic neurons (at protein level).

The protein localises to the postsynaptic density membrane. Its function is as follows. Postsynaptic density membrane protein that indirectly regulates glutamatergic synaptic transmission through lysophosphatidic acid (LPA)-mediated signaling pathways. Binds lysophosphatidic acid (LPA) and mediates its internalization into cells. Could act as receptor or a transporter of this lipid at the post-synaptic membrane. Modulates lysophosphatidic acid (LPA) activity in neuron axonal outgrowth during development by attenuating phospholipid-induced axon collapse. The polypeptide is Phospholipid phosphatase-related protein type 4 (Homo sapiens (Human)).